The sequence spans 390 residues: 2-deoxy-scyllo-inosose synthase (390 aa).

NAD(+) is bound by residues D42, 73 to 76 (EQNK), 105 to 109 (GVTGN), 129 to 130 (TT), 140 to 142 (SLK), and 151 to 152 (KN). K142 is an active-site residue. Position 184 (E184) interacts with Co(2+). E244 is an active-site residue. 2 residues coordinate Co(2+): H247 and H263. The segment at 371–390 (PPRPAAARTDDAATVLGGAG) is disordered.

This sequence belongs to the sugar phosphate cyclases superfamily. DOI synthase family. NAD(+) serves as cofactor. Requires Co(2+) as cofactor.

It catalyses the reaction D-glucose 6-phosphate = 2-deoxy-L-scyllo-inosose + phosphate. Its pathway is metabolic intermediate biosynthesis; 2-deoxystreptamine biosynthesis; 2-deoxystreptamine from D-glucose 6-phosphate: step 1/4. It functions in the pathway antibiotic biosynthesis; kanamycin biosynthesis. Functionally, catalyzes the intramolecular carbocycle formation from D-glucose-6-phosphate to 2-deoxy-scyllo-inosose (DOI). In Streptomyces kanamyceticus, this protein is 2-deoxy-scyllo-inosose synthase (kanC).